A 411-amino-acid chain; its full sequence is LL-diaminopimelate aminotransferase 1 (411 aa).

The substrate site is built by Y15 and G42. Pyridoxal 5'-phosphate-binding positions include Y72, 108-109 (SK), Y132, N187, Y218, and 246-248 (SFS). The substrate site is built by K109, Y132, and N187. Position 249 is an N6-(pyridoxal phosphate)lysine (K249). Residues R257 and N292 each coordinate pyridoxal 5'-phosphate. The substrate site is built by N292 and R388.

Belongs to the class-I pyridoxal-phosphate-dependent aminotransferase family. LL-diaminopimelate aminotransferase subfamily. As to quaternary structure, homodimer. The cofactor is pyridoxal 5'-phosphate.

The catalysed reaction is (2S,6S)-2,6-diaminopimelate + 2-oxoglutarate = (S)-2,3,4,5-tetrahydrodipicolinate + L-glutamate + H2O + H(+). Its pathway is amino-acid biosynthesis; L-lysine biosynthesis via DAP pathway; LL-2,6-diaminopimelate from (S)-tetrahydrodipicolinate (aminotransferase route): step 1/1. Functionally, involved in the synthesis of meso-diaminopimelate (m-DAP or DL-DAP), required for both lysine and peptidoglycan biosynthesis. Catalyzes the direct conversion of tetrahydrodipicolinate to LL-diaminopimelate. The sequence is that of LL-diaminopimelate aminotransferase 1 from Nostoc sp. (strain PCC 7120 / SAG 25.82 / UTEX 2576).